Consider the following 602-residue polypeptide: General amino-acid permease GAP1 (602 aa).

Over 1-95 (MSNTSSYEKN…LKHHLKNRHL (95 aa)) the chain is Cytoplasmic. A Glycyl lysine isopeptide (Lys-Gly) (interchain with G-Cter in ubiquitin) cross-link involves residue Lys-76. The helical transmembrane segment at 96–116 (QMIAIGGAIGTGLLVGSGTAL) threads the bilayer. Residues 117-121 (RTGGP) are Extracellular-facing. Residues 122–142 (ASLLIGWGSTGTMIYAMVMAL) form a helical membrane-spanning segment. Topologically, residues 143 to 165 (GELAVIFPISGGFTTYATRFIDE) are cytoplasmic. Residues 166 to 185 (SFGYANNFNYMLQWLVVLPL) traverse the membrane as a helical segment. Residues 186–204 (EIVSASITVNFWGTDPKYR) are Extracellular-facing. The helical transmembrane segment at 205-224 (DGFVALFWLAIVIINMFGVK) threads the bilayer. The Cytoplasmic portion of the chain corresponds to 225–237 (GYGEAEFVFSFIK). The helical transmembrane segment at 238–256 (VITVVGFIILGIILNCGGG) threads the bilayer. The Extracellular segment spans residues 257 to 280 (PTGGYIGGKYWHDPGAFAGDTPGA). The helical transmembrane segment at 281-298 (KFKGVCSVFVTAAFSFAG) threads the bilayer. At 299-321 (SELVGLAASESVEPRKSVPKAAK) the chain is on the cytoplasmic side. A helical membrane pass occupies residues 322–342 (QVFWRITLFYILSLLMIGLLV). The Extracellular segment spans residues 343–376 (PYNDKSLIGASSVDAAASPFVIAIKTHGIKGLPS). Residues 377 to 396 (VVNVVILIAVLSVGNSAIYA) form a helical membrane-spanning segment. Over 397 to 421 (CSRTMVALAEQRFLPEIFSYVDRKG) the chain is Cytoplasmic. Residues 422-442 (RPLVGIAVTSAFGLIAFVAAS) traverse the membrane as a helical segment. The Extracellular portion of the chain corresponds to 443–451 (KKEGEVFNW). A helical membrane pass occupies residues 452 to 472 (LLALSGLSSLFTWGGICICHI). Residues 473-491 (RFRKALAAQGRGLDELSFK) are Cytoplasmic-facing. Residues 492–510 (SPTGVWGSYWGLFMVIIMF) form a helical membrane-spanning segment. Topologically, residues 511–529 (IAQFYVAVFPVGDSPSAEG) are extracellular. A helical membrane pass occupies residues 530 to 548 (FFEAYLSFPLVMVMYIGHK). Over 549 to 602 (IYKRNWKLFIPAEKMDIDTGRREVDLDLLKQEIAEEKAIMATKPRWYRIWNFWC) the chain is Cytoplasmic.

This sequence belongs to the amino acid-polyamine-organocation (APC) superfamily. YAT (TC 2.A.3.10) family. Active permease is phosphorylated. The addition of glutamine causes rapid dephosphorylation and inactivation of the permease. Post-translationally, ubiquitination by RSP5 and the RSP5-associated proteins BUL1 and BUL2, leads the addition of poly-ubiquitin chains being specifically formed by linkage through the lysine 63 residue of ubiquitin and mediates ammonium-induced endocytosis and degradation in the vacuole.

Its subcellular location is the cell membrane. It is found in the endoplasmic reticulum membrane. General amino-acid permease involved in the uptake of all the naturally occurring L-amino-acids, related compounds such as ornithine and citrulline, some D-amino acids, toxic amino acid analogs such as azetidine-2-carboxylate, and the polyamines putrescine and spermidine. Senses its transport substrates to set an appropriate level of transporter activity at the cell surface. Required for FLO11 expression and invasive growth. The protein is General amino-acid permease GAP1 of Saccharomyces cerevisiae (strain ATCC 204508 / S288c) (Baker's yeast).